The primary structure comprises 377 residues: Polar flagellin F (377 aa).

Coiled coils occupy residues 98–131 (QSAN…ETTS) and 302–339 (DSQR…IQDT).

Belongs to the bacterial flagellin family. In terms of assembly, heteromer of multiple flagellin subunits including FlaA, FlaB/D, FlaC, FlaE and FlaF.

The protein resides in the secreted. It is found in the bacterial flagellum. Functionally, flagellin is the subunit protein which polymerizes to form the filaments of bacterial flagella. The protein is Polar flagellin F (flaF) of Vibrio parahaemolyticus serotype O3:K6 (strain RIMD 2210633).